Reading from the N-terminus, the 484-residue chain is L-carnitine dehydrogenase/betainyl-CoA thioesterase (484 aa).

An L-carnitine dehydrogenase region spans residues 1 to 322 (MKIAAIGGGV…ENRFYARNGK (322 aa)). NAD(+) is bound at residue 7–12 (GGGVIG). Residues 323–484 (VQADYPLRLH…RAVRLKETSA (162 aa)) are betainyl-CoA thioesterase.

This sequence in the N-terminal section; belongs to the 3-hydroxyacyl-CoA dehydrogenase family. L-carnitine dehydrogenase subfamily. The protein in the C-terminal section; belongs to the betainyl-CoA thioesterase family. Homodimer.

It is found in the cytoplasm. It carries out the reaction carnitine + NAD(+) = 3-dehydrocarnitine + NADH + H(+). The enzyme catalyses N,N,N-trimethylglycyl-CoA + H2O = glycine betaine + CoA + H(+). The protein operates within amine and polyamine metabolism; carnitine metabolism. Its function is as follows. Multifunctional enzyme that catalyzes the NAD(+)-dependent oxidation of L-carnitine to 3-dehydrocarnitine and the cleavage of betainyl-CoA (N,N,N-trimethylglycyl-CoA) into glycine betaine and coenzyme A. This chain is L-carnitine dehydrogenase/betainyl-CoA thioesterase, found in Agrobacterium fabrum (strain C58 / ATCC 33970) (Agrobacterium tumefaciens (strain C58)).